A 567-amino-acid polypeptide reads, in one-letter code: MLYLLTIFSLLLPALAINARSNSNVAVYWGQNSGGSQQRLSYYCDSDAVDIVILSFMHQFPSPIQLNFANACEGTYTANGILQCQTIAEDIKYCQNKGKTILLSLGGAAGSYGFSDDATAKQFAHTLWDLFGNSKNLATNDRPFYDAVLDGFDFDIENNWSTGYPALATELRTLFQKDTSKNYYLGAAPQCPYPDASVGPLLKQSEIDFVFIQFYNNYCNLGSSSFNWDTWLNYAETDSPNKNIKLFVGVPASSRAAGSGYNDPSAVSQYLTSDILNSKYFGGISMWDVSAGWSNTNSNGNFVENMKAIVKKASPGEETTSSSTTTTTTTTSTTISSSSSSSKTSKTSTTSTTSSSISSTTSSTTSSTSSSSTSSSTSSTTSSSTTSSQISTTSTAPTSSTSLSSSTISTSASTSDTTSVTSSETTPVVTPSSLSSAITIPGDSTTTGISKSSSTKPATSTTSALSSSTTTVATIPDDKEIINTPTDTETTSKPPAIITESDATTITQNLTPSTTTKNVKTTSTNIVTEWVWAPTTLRTLTTTYQILTTRTHIETVFAEPSTVVIYN.

The signal sequence occupies residues 1-16; the sequence is MLYLLTIFSLLLPALA. A GH18 domain is found at 23–313; sequence SNVAVYWGQN…ENMKAIVKKA (291 aa). The active-site Proton donor is Glu-157. Asn-159 is a glycosylation site (N-linked (GlcNAc...) asparagine). The tract at residues 313–471 is disordered; the sequence is ASPGEETTSS…TSALSSSTTT (159 aa). 2 stretches are compositionally biased toward low complexity: residues 319 to 436 and 444 to 471; these read TTSS…SLSS and STTT…STTT.

Belongs to the glycosyl hydrolase 18 family. Chitinase class III subfamily.

The protein resides in the secreted. It catalyses the reaction Random endo-hydrolysis of N-acetyl-beta-D-glucosaminide (1-&gt;4)-beta-linkages in chitin and chitodextrins.. Chitinase involved in the remodeling of chitin in the fungal cell wall. Plays a role in cell separation. This chain is Chitinase 3 (CHT3), found in Candida albicans (strain SC5314 / ATCC MYA-2876) (Yeast).